Here is a 132-residue protein sequence, read N- to C-terminus: Fatty acid-binding protein, brain (132 aa).

Val-2 carries the post-translational modification N-acetylvaline. 127–129 contributes to the a fatty acid binding site; it reads RHY.

This sequence belongs to the calycin superfamily. Fatty-acid binding protein (FABP) family.

The protein resides in the cytoplasm. FABPs are thought to play a role in the intracellular transport of long-chain fatty acids and their acyl-CoA esters. The sequence is that of Fatty acid-binding protein, brain (FABP7) from Gallus gallus (Chicken).